We begin with the raw amino-acid sequence, 199 residues long: N-(5'-phosphoribosyl)anthranilate isomerase (199 aa).

The protein belongs to the TrpF family.

It carries out the reaction N-(5-phospho-beta-D-ribosyl)anthranilate = 1-(2-carboxyphenylamino)-1-deoxy-D-ribulose 5-phosphate. It functions in the pathway amino-acid biosynthesis; L-tryptophan biosynthesis; L-tryptophan from chorismate: step 3/5. The polypeptide is N-(5'-phosphoribosyl)anthranilate isomerase (Streptococcus pneumoniae (strain Hungary19A-6)).